Reading from the N-terminus, the 317-residue chain is Ribosomal protein L11 methyltransferase (317 aa).

S-adenosyl-L-methionine-binding residues include T158, G179, D201, and N244.

The protein belongs to the methyltransferase superfamily. PrmA family.

The protein localises to the cytoplasm. It carries out the reaction L-lysyl-[protein] + 3 S-adenosyl-L-methionine = N(6),N(6),N(6)-trimethyl-L-lysyl-[protein] + 3 S-adenosyl-L-homocysteine + 3 H(+). Its function is as follows. Methylates ribosomal protein L11. The sequence is that of Ribosomal protein L11 methyltransferase from Streptococcus mutans serotype c (strain ATCC 700610 / UA159).